The sequence spans 319 residues: MRNQKVNRTVLIGAGFVGSSYAFTLINQGITDELVIIDLNKDKAMGDVMDLNHGKAFAPHPVKTWYGTYDDCKEADIVCVCAGANQKPGETRLDLVEKNLKIFKGIIGEVMASGFDGIFLVATNPVDILTYATWKFSGLPKERVIGSGTTLDTARFRYLLSEYFGVAAHNAHGYIIGEHGDTELPVWSHANIGGVPVSDLLKRNEKYKAEDLDELFDNVKNAAYHIIEKKGATYYGVAMSLARITKAIYRNEEAILTVSAHLDGEFGENDVYIGVPAVVGRCGAREIVELDLNEKEKQQFKHSAGVLKAILKPHFELQA.

NAD(+)-binding positions include valine 17, aspartate 38, lysine 43, tyrosine 69, and 83-84 (GA). Substrate contacts are provided by residues glutamine 86, arginine 92, and 124–127 (NPVD). NAD(+)-binding positions include 122 to 124 (ATN) and serine 147. Position 152–155 (152–155 (DTAR)) interacts with substrate. Beta-D-fructose 1,6-bisphosphate contacts are provided by arginine 157 and histidine 172. The Proton acceptor role is filled by histidine 179. Tyrosine 224 bears the Phosphotyrosine mark. Threonine 233 provides a ligand contact to substrate.

Belongs to the LDH/MDH superfamily. LDH family. As to quaternary structure, homotetramer.

The protein resides in the cytoplasm. It catalyses the reaction (S)-lactate + NAD(+) = pyruvate + NADH + H(+). It participates in fermentation; pyruvate fermentation to lactate; (S)-lactate from pyruvate: step 1/1. With respect to regulation, allosterically activated by fructose 1,6-bisphosphate (FBP). Its function is as follows. Catalyzes the conversion of lactate to pyruvate. The sequence is that of L-lactate dehydrogenase from Bacillus licheniformis (strain ATCC 14580 / DSM 13 / JCM 2505 / CCUG 7422 / NBRC 12200 / NCIMB 9375 / NCTC 10341 / NRRL NRS-1264 / Gibson 46).